We begin with the raw amino-acid sequence, 133 residues long: Protein NrdI (133 aa).

The protein belongs to the NrdI family.

In terms of biological role, probably involved in ribonucleotide reductase function. The sequence is that of Protein NrdI from Cronobacter sakazakii (strain ATCC BAA-894) (Enterobacter sakazakii).